The sequence spans 932 residues: DNA mismatch repair protein MutS (932 aa).

615–622 is an ATP binding site; that stretch reads GPNMAGKS.

This sequence belongs to the DNA mismatch repair MutS family.

Functionally, this protein is involved in the repair of mismatches in DNA. It is possible that it carries out the mismatch recognition step. This protein has a weak ATPase activity. The sequence is that of DNA mismatch repair protein MutS from Clostridium botulinum (strain Langeland / NCTC 10281 / Type F).